The following is a 70-amino-acid chain: Movement protein TGBp3 (70 aa).

Topologically, residues 1–4 (MEAG) are lumenal. Residues 5–27 (AYLNAIIFVLVATIIAVISRGLT) traverse the membrane as a helical segment. Over 28-70 (RTEPCTIRITGESITVHACHIDSETIKALANLKPLSLERLSFQ) the chain is Cytoplasmic.

It belongs to the Tymovirales TGBp3 protein family.

It localises to the host endoplasmic reticulum membrane. Functionally, plays a role in viral cell-to-cell propagation, by facilitating genome transport to neighboring plant cells through plasmosdesmata. May induce the formation of granular vesicles derived from the Endoplasmic reticulum, which align on actin filaments. The chain is Movement protein TGBp3 from Potato virus X (strain CP) (PVX).